The following is a 573-amino-acid chain: Putative adenine deaminase PTO1085 (573 aa).

Belongs to the metallo-dependent hydrolases superfamily. Adenine deaminase family.

It carries out the reaction adenine + H2O + H(+) = hypoxanthine + NH4(+). The polypeptide is Putative adenine deaminase PTO1085 (Picrophilus torridus (strain ATCC 700027 / DSM 9790 / JCM 10055 / NBRC 100828 / KAW 2/3)).